The chain runs to 440 residues: Armadillo-like helical domain containing protein 1 (440 aa).

The chain is Armadillo-like helical domain containing protein 1 from Homo sapiens (Human).